A 682-amino-acid polypeptide reads, in one-letter code: Potassium-transporting ATPase ATP-binding subunit (682 aa).

Transmembrane regions (helical) follow at residues 34–54 (PVMF…IAMA), 62–82 (ALFS…ANFA), 219–239 (IALT…TATL), and 254–274 (VLVA…LSAI). D307 functions as the 4-aspartylphosphate intermediate in the catalytic mechanism. Residues D344, E348, 377 to 384 (FTAQSRMS), and K395 contribute to the ATP site. The Mg(2+) site is built by D518 and D522. A run of 3 helical transmembrane segments spans residues 588-608 (FAII…LNIM), 616-636 (AILS…PLAL), and 656-676 (IYGL…DLLL).

The protein belongs to the cation transport ATPase (P-type) (TC 3.A.3) family. Type IA subfamily. In terms of assembly, the system is composed of three essential subunits: KdpA, KdpB and KdpC.

It is found in the cell inner membrane. The enzyme catalyses K(+)(out) + ATP + H2O = K(+)(in) + ADP + phosphate + H(+). Its function is as follows. Part of the high-affinity ATP-driven potassium transport (or Kdp) system, which catalyzes the hydrolysis of ATP coupled with the electrogenic transport of potassium into the cytoplasm. This subunit is responsible for energy coupling to the transport system and for the release of the potassium ions to the cytoplasm. This Escherichia coli O8 (strain IAI1) protein is Potassium-transporting ATPase ATP-binding subunit.